Consider the following 295-residue polypeptide: MADLDDIKDGKDFGIGTPQTNTPYTLKGCGALDWGMQSRLARIFNPKSNRTVMLAFDHGYFQGPTTGLERIDLSIAPLFAETDVLMCTRGILRSTVPPATNKPVVLRASGGNSILGELSNECVAVAMEDALRLNVCAVAAQVYIGSEFEHQSINNIIKLVDAGNRYGIPTLAVTGVGKEMARDARYFSLASRIAAEMGAQVVKTYFVEEGFEKVTASCPVPIVIAGGKKLPEHEALEMCFRAIDQGASGVDMGRNIFQSSAPLAMLKAVKKVVHENMSAREAFQFWQEEKQGEGQ.

Lys-203 (schiff-base intermediate with substrate) is an active-site residue.

It belongs to the DeoC/FbaB aldolase family. Homodecamer.

It is found in the cytoplasm. It carries out the reaction dihydroxyacetone phosphate + acetyl-CoA = 3-hydroxy-2,4-dioxopentyl phosphate + CoA. Functionally, involved in the degradation of phospho-AI-2, thereby terminating induction of the lsr operon and closing the AI-2 signaling cycle. Catalyzes the transfer of an acetyl moiety from 3-hydroxy-5-phosphonooxypentane-2,4-dione to CoA to form glycerone phosphate and acetyl-CoA. In Enterobacter sp. (strain 638), this protein is 3-hydroxy-5-phosphonooxypentane-2,4-dione thiolase.